A 126-amino-acid chain; its full sequence is Phosphoribosyl-ATP pyrophosphatase (126 aa).

Belongs to the PRA-PH family.

The protein localises to the cytoplasm. The catalysed reaction is 1-(5-phospho-beta-D-ribosyl)-ATP + H2O = 1-(5-phospho-beta-D-ribosyl)-5'-AMP + diphosphate + H(+). Its pathway is amino-acid biosynthesis; L-histidine biosynthesis; L-histidine from 5-phospho-alpha-D-ribose 1-diphosphate: step 2/9. The protein is Phosphoribosyl-ATP pyrophosphatase of Variovorax paradoxus (strain S110).